Reading from the N-terminus, the 251-residue chain is NADPH-dependent oxidoreductase (251 aa).

It belongs to the flavin oxidoreductase frp family. It depends on FMN as a cofactor.

Functionally, reduces FMN, organic nitro compounds and disulfide DTNB. Involved in maintenance of the cellular redox state and the disulfide stress response. In Staphylococcus aureus (strain MRSA252), this protein is NADPH-dependent oxidoreductase (nfrA).